The sequence spans 291 residues: Porphobilinogen deaminase (291 aa).

At C237 the chain carries S-(dipyrrolylmethanemethyl)cysteine.

Belongs to the HMBS family. Monomer. Requires dipyrromethane as cofactor.

It catalyses the reaction 4 porphobilinogen + H2O = hydroxymethylbilane + 4 NH4(+). It functions in the pathway porphyrin-containing compound metabolism; protoporphyrin-IX biosynthesis; coproporphyrinogen-III from 5-aminolevulinate: step 2/4. In terms of biological role, tetrapolymerization of the monopyrrole PBG into the hydroxymethylbilane pre-uroporphyrinogen in several discrete steps. This chain is Porphobilinogen deaminase, found in Clostridium perfringens (strain ATCC 13124 / DSM 756 / JCM 1290 / NCIMB 6125 / NCTC 8237 / Type A).